A 157-amino-acid polypeptide reads, in one-letter code: Small ribosomal subunit protein uS7 (157 aa).

Belongs to the universal ribosomal protein uS7 family. Part of the 30S ribosomal subunit. Contacts proteins S9 and S11.

Functionally, one of the primary rRNA binding proteins, it binds directly to 16S rRNA where it nucleates assembly of the head domain of the 30S subunit. Is located at the subunit interface close to the decoding center, probably blocks exit of the E-site tRNA. This Akkermansia muciniphila (strain ATCC BAA-835 / DSM 22959 / JCM 33894 / BCRC 81048 / CCUG 64013 / CIP 107961 / Muc) protein is Small ribosomal subunit protein uS7.